Consider the following 511-residue polypeptide: Glucans biosynthesis protein G (511 aa).

Positions Met-1 to Ala-22 are cleaved as a signal peptide.

Belongs to the OpgD/OpgG family.

The protein resides in the periplasm. It participates in glycan metabolism; osmoregulated periplasmic glucan (OPG) biosynthesis. Its function is as follows. Involved in the biosynthesis of osmoregulated periplasmic glucans (OPGs). This chain is Glucans biosynthesis protein G, found in Shigella boydii serotype 4 (strain Sb227).